The primary structure comprises 200 residues: Potassium-transporting ATPase KdpC subunit (200 aa).

The helical transmembrane segment at 7-27 (PALVMIVLFTILTGLIYPLAM) threads the bilayer.

Belongs to the KdpC family. In terms of assembly, the system is composed of three essential subunits: KdpA, KdpB and KdpC.

The protein localises to the cell inner membrane. Part of the high-affinity ATP-driven potassium transport (or Kdp) system, which catalyzes the hydrolysis of ATP coupled with the electrogenic transport of potassium into the cytoplasm. This subunit acts as a catalytic chaperone that increases the ATP-binding affinity of the ATP-hydrolyzing subunit KdpB by the formation of a transient KdpB/KdpC/ATP ternary complex. The sequence is that of Potassium-transporting ATPase KdpC subunit from Methylocella silvestris (strain DSM 15510 / CIP 108128 / LMG 27833 / NCIMB 13906 / BL2).